The chain runs to 762 residues: MSAALKLLEPLKYKAPCNPAYRAAQSVAHWHMGNITPHGGQTLPECNSSCHLARKVKNVGGTTLPRRTFTASSAHLGLEFNKASTLNASTLHPDSSSAGGGEEDVEVFDSFEGTRVFLKLRPEYQLHSYNRSDTHQPIAASEVELILHKVTFYQNKLQPEVITNYFYKLSSLPAEQNSVLLSSNSFALLCQLSVKNIQLFNTSDLISILKAFVDLRIPPSLSMLDVYETRFCHQVWEMTLDQLLLVADLWRNLGRRVPRFFKIFFSYLNLHWRELSLSQLIHLIYIIGENRQVPQDLMQRLESLILKYVDSVNLEEVGTICLGFFKSSSSLSEFVMRKIGDLACANMQHLSSHTLVHILKMFRFTHVDHIHFMKQFGEIAPQRIPSLGVQGVMHLTLACSALRILDERVMNAVAASLPPRVAHCRSKDVAKILWSFGTLNYKPPNTEEFYSSLINEIHRKMPEFNQYPEHLLTCLIGLAFSEYFPVEFINVALSPGFVKLAQERSKFELTKELFTLDGTVAIECPDYKGNRLNSHLQQETSANLWNLASKDMRSKPEFLETLYLLETMLGGPQYIKHHMILPHTRSSDLEVQLDANMKPMPFNSEATPTEDGAQLRFKQVGVSLTDDLMNQLLKGKAKRYFQGQIELETGQPPMELRKKTTVPLVNSGCNGTDRLGDGMVGLCPLAHMQPPLVKLAIQFTNKNQYCYGSRALLGLHNMKRRQLVQIGYRVVELPHWEWLPLLKRTRLEKLAYLHEKVFTSAL.

Serine 95 is subject to Phosphoserine. An N6-acetyllysine modification is found at lysine 506. The 61-residue stretch at 695-755 folds into the RAP domain; that stretch reads LAIQFTNKNQ…RLEKLAYLHE (61 aa).

The protein belongs to the FAST kinase family. As to quaternary structure, found in a complex with GRSF1, DDX28, DHX30 and FASTKD2. Associates with the 12S mitochondrial rRNA (12S mt-rRNA). In terms of tissue distribution, expression detected in spleen, testis, colon, heart, smooth muscle, kidney, brain, lung, liver, brown and white adipose tissue.

The protein resides in the mitochondrion matrix. It is found in the mitochondrion nucleoid. Its function is as follows. Plays an important role in the processing of non-canonical mitochondrial mRNA precursors. This Mus musculus (Mouse) protein is FAST kinase domain-containing protein 5, mitochondrial (Fastkd5).